Reading from the N-terminus, the 242-residue chain is Probable 2-phosphosulfolactate phosphatase (242 aa).

It belongs to the ComB family. It depends on Mg(2+) as a cofactor.

It carries out the reaction (2R)-O-phospho-3-sulfolactate + H2O = (2R)-3-sulfolactate + phosphate. This is Probable 2-phosphosulfolactate phosphatase from Parasynechococcus marenigrum (strain WH8102).